Consider the following 451-residue polypeptide: Midnolin-B (451 aa).

The Ubiquitin-like domain maps to 20–94 (MNLNIQSTTG…LTLLPSVEAG (75 aa)). Disordered regions lie at residues 187 to 254 (ASCT…RSRK), 331 to 372 (RNAK…QTEN), and 388 to 427 (QKRL…EGSL). 3 stretches are compositionally biased toward low complexity: residues 190 to 205 (TPGS…TSST), 237 to 250 (STRG…SPSS), and 336 to 347 (TSPQSTGPQQTT). The span at 363–372 (SGDRLRQTEN) shows a compositional bias: basic and acidic residues. Residues 388–397 (QKRLRRKARR) show a composition bias toward basic residues. Residues 413 to 426 (RTSSNSSTSSGEGS) are compositionally biased toward low complexity.

The protein localises to the nucleus. Its subcellular location is the cytoplasm. It is found in the cytosol. It localises to the nucleolus. In terms of biological role, facilitates ubiquitin-independent proteasomal degradation of polycomb protein CBX4. Plays a role in inhibiting the activity of glucokinase GCK and both glucose-induced and basal insulin secretion. In Xenopus laevis (African clawed frog), this protein is Midnolin-B (midn-b).